The primary structure comprises 449 residues: Glycosyl hydrolase-like protein 1 (449 aa).

A beta-D-glucoside is bound by residues glutamine 22, histidine 119, asparagine 164–glutamate 165, tyrosine 292, glutamate 350, tryptophan 393, and tyrosine 406. The active-site Proton donor is glutamate 165. The Nucleophile role is filled by glutamate 350.

The protein belongs to the glycosyl hydrolase 1 family. In terms of tissue distribution, mainly expressed in flowers, flower buds and young leaves, and, to a lesser extent, in old leaves, stems and roots.

It is found in the cytoplasm. The protein operates within secondary metabolite biosynthesis; terpenoid biosynthesis. Functionally, component of the oleanane-type triterpene saponins (e.g. saponarioside A and saponarioside B) biosynthetic pathway, leading to the production of natural products with detergent properties used as traditional sources of soap. Beta-glycosidase that catalyzes the transfer of glucose moiety to QA-triFRXX to produce QA-triF(Q)RXX via the elongation of the C-28 sugar chain with a D-quinovose. This chain is Glycosyl hydrolase-like protein 1, found in Saponaria officinalis (Common soapwort).